Consider the following 572-residue polypeptide: Phosphoenolpyruvate-protein phosphotransferase (572 aa).

The Tele-phosphohistidine intermediate role is filled by H191. The phosphoenolpyruvate site is built by R298 and R334. E433 and D457 together coordinate Mg(2+). Phosphoenolpyruvate contacts are provided by residues 456 to 457 and R467; that span reads ND. C504 acts as the Proton donor in catalysis.

Belongs to the PEP-utilizing enzyme family. Homodimer. The cofactor is Mg(2+).

It localises to the cytoplasm. It catalyses the reaction L-histidyl-[protein] + phosphoenolpyruvate = N(pros)-phospho-L-histidyl-[protein] + pyruvate. General (non sugar-specific) component of the phosphoenolpyruvate-dependent sugar phosphotransferase system (sugar PTS). This major carbohydrate active-transport system catalyzes the phosphorylation of incoming sugar substrates concomitantly with their translocation across the cell membrane. Enzyme I transfers the phosphoryl group from phosphoenolpyruvate (PEP) to the phosphoryl carrier protein (HPr). The chain is Phosphoenolpyruvate-protein phosphotransferase (ptsI) from Staphylococcus aureus (strain MRSA252).